A 459-amino-acid polypeptide reads, in one-letter code: ERBB receptor feedback inhibitor 1 (459 aa).

Residue S2 is modified to N-acetylserine. Residues T126 and T130 each carry the phosphothreonine modification. Positions 227–352 (QNRVVPDPNP…VMPPTQSFAP (126 aa)) are disordered. Phosphoserine is present on residues S250 and S271. Residues 264–273 (SSCTHRASPS) are compositionally biased toward polar residues. Positions 282-291 (PPRVPIPPRP) are enriched in pro residues. S300 is subject to Phosphoserine. Over residues 310–323 (DEDRPPKVPPREPL) the composition is skewed to basic and acidic residues. Positions 324 to 335 (SRSNSRTPSPKS) are enriched in polar residues. The segment at 332 to 361 (SPKSLPSYLNGVMPPTQSFAPDPKYVSSKA) is interaction with EGFR and ERBB2 and regulation of EGFR activation. A Phosphoserine modification is found at S458.

This sequence belongs to the MIG6 family. Interacts with EGFR and ERBB2.

The protein localises to the cytoplasm. It localises to the cell membrane. It is found in the nucleus. Functionally, negative regulator of EGFR signaling in skin morphogenesis. Acts as a negative regulator for several EGFR family members, including ERBB2, ERBB3 and ERBB4. Inhibits EGFR catalytic activity by interfering with its dimerization. Inhibits autophosphorylation of EGFR, ERBB2 and ERBB4. Important for normal keratinocyte proliferation and differentiation. Plays a role in modulating the response to steroid hormones in the uterus. Required for normal response to progesterone in the uterus and for fertility. Mediates epithelial estrogen responses in the uterus by regulating ESR1 levels and activation. Important for regulation of endometrium cell proliferation. Important for normal prenatal and perinatal lung development. The sequence is that of ERBB receptor feedback inhibitor 1 (Errfi1) from Rattus norvegicus (Rat).